We begin with the raw amino-acid sequence, 341 residues long: Methionine import ATP-binding protein MetN 1 (341 aa).

In terms of domain architecture, ABC transporter spans 2–241 (IEFRQVSKTF…PKTTIAQNFV (240 aa)). 38–45 (GYSGAGKS) is a binding site for ATP.

Belongs to the ABC transporter superfamily. Methionine importer (TC 3.A.1.24) family. The complex is composed of two ATP-binding proteins (MetN), two transmembrane proteins (MetI) and a solute-binding protein (MetQ).

It is found in the cell membrane. It catalyses the reaction L-methionine(out) + ATP + H2O = L-methionine(in) + ADP + phosphate + H(+). The enzyme catalyses D-methionine(out) + ATP + H2O = D-methionine(in) + ADP + phosphate + H(+). Its function is as follows. Part of the ABC transporter complex MetNIQ involved in methionine import. Responsible for energy coupling to the transport system. The sequence is that of Methionine import ATP-binding protein MetN 1 from Staphylococcus aureus (strain MW2).